We begin with the raw amino-acid sequence, 210 residues long: Large ribosomal subunit protein uL4 (210 aa).

The segment covering 41-51 has biased composition (polar residues); the sequence is ANARQGTQSTK. 2 disordered regions span residues 41-60 and 67-98; these read ANARQGTQSTKTRGEVQGSS and KGTGNARMGTNRSPVRRHGGVAFGPRPRDFSK.

This sequence belongs to the universal ribosomal protein uL4 family. Part of the 50S ribosomal subunit.

Functionally, one of the primary rRNA binding proteins, this protein initially binds near the 5'-end of the 23S rRNA. It is important during the early stages of 50S assembly. It makes multiple contacts with different domains of the 23S rRNA in the assembled 50S subunit and ribosome. Its function is as follows. Forms part of the polypeptide exit tunnel. This Dehalococcoides mccartyi (strain ATCC BAA-2266 / KCTC 15142 / 195) (Dehalococcoides ethenogenes (strain 195)) protein is Large ribosomal subunit protein uL4.